The chain runs to 507 residues: Cytochrome c-552 (507 aa).

The N-terminal stretch at 1 to 22 is a signal peptide; the sequence is MTKFKLLLAGSLVAIVSMGLLA. H102, C130, C133, K134, C168, C171, H172, C211, C214, and H215 together coordinate heme c. Residues E217, Y218, K274, and Q276 each contribute to the Ca(2+) site. Y218 provides a ligand contact to substrate. H277 lines the substrate pocket. Heme c-binding residues include H288, C295, C298, H299, H313, C326, C329, H330, and H405.

Belongs to the cytochrome c-552 family. In terms of assembly, homodimer. Interacts with NrfH. May form a heterotetramer with NrfH. The cofactor is Ca(2+). Requires heme c as cofactor.

The protein localises to the periplasm. The enzyme catalyses 6 Fe(III)-[cytochrome c] + NH4(+) + 2 H2O = 6 Fe(II)-[cytochrome c] + nitrite + 8 H(+). The protein operates within nitrogen metabolism; nitrate reduction (assimilation). Functionally, catalyzes the reduction of nitrite to ammonia, consuming six electrons in the process. Has very low activity toward hydroxylamine, and even lower activity toward sulfite. Sulfite reductase activity is maximal at neutral pH. The chain is Cytochrome c-552 (nrfA) from Wolinella succinogenes (strain ATCC 29543 / DSM 1740 / CCUG 13145 / JCM 31913 / LMG 7466 / NCTC 11488 / FDC 602W) (Vibrio succinogenes).